The sequence spans 216 residues: Penicillin-binding protein activator LpoB (216 aa).

The first 20 residues, 1-20, serve as a signal peptide directing secretion; it reads MIKNLSRYALVTAFALFLSG. Cys21 carries N-palmitoyl cysteine lipidation. A lipid anchor (S-diacylglycerol cysteine) is attached at Cys21. The interval 28–77 is disordered; it reads QPAPVDEAKPGTEQPAQPTQPVPTVPSVPTVPAQPGPIEHPDQTSQPAPR.

This sequence belongs to the LpoB family. As to quaternary structure, interacts with PBP1b.

It localises to the cell outer membrane. In terms of biological role, regulator of peptidoglycan synthesis that is essential for the function of penicillin-binding protein 1B (PBP1b). This Enterobacter sp. (strain 638) protein is Penicillin-binding protein activator LpoB.